The chain runs to 428 residues: Tol-Pal system protein TolB (428 aa).

A signal peptide spans 1-23; that stretch reads MRRLYQTVCTLALLLVGLQAAHA.

The protein belongs to the TolB family. In terms of assembly, the Tol-Pal system is composed of five core proteins: the inner membrane proteins TolA, TolQ and TolR, the periplasmic protein TolB and the outer membrane protein Pal. They form a network linking the inner and outer membranes and the peptidoglycan layer.

The protein resides in the periplasm. Functionally, part of the Tol-Pal system, which plays a role in outer membrane invagination during cell division and is important for maintaining outer membrane integrity. This chain is Tol-Pal system protein TolB, found in Alkalilimnicola ehrlichii (strain ATCC BAA-1101 / DSM 17681 / MLHE-1).